Reading from the N-terminus, the 188-residue chain is Grand meiotic recombination cluster protein 2 (188 aa).

Composition is skewed to polar residues over residues 1–13 and 21–31; these read MSDTTEVPRQSSE and ERTNSLKSPDV. Positions 1 to 31 are disordered; that stretch reads MSDTTEVPRQSSENDQDNNLERTNSLKSPDV.

Functionally, probable transcriptional activator involved in meiotic prophase and synaptonemal complex (SC) assembly. This Saccharomyces cerevisiae (strain ATCC 204508 / S288c) (Baker's yeast) protein is Grand meiotic recombination cluster protein 2 (GMC2).